The sequence spans 230 residues: 2,3-bisphosphoglycerate-dependent phosphoglycerate mutase (230 aa).

Residues 8-15 (RHGESEWN), 21-22 (TG), arginine 60, 87-90 (ERHY), lysine 98, 114-115 (RR), and 183-184 (GN) each bind substrate. The Tele-phosphohistidine intermediate role is filled by histidine 9. Glutamate 87 acts as the Proton donor/acceptor in catalysis.

It belongs to the phosphoglycerate mutase family. BPG-dependent PGAM subfamily.

It carries out the reaction (2R)-2-phosphoglycerate = (2R)-3-phosphoglycerate. It participates in carbohydrate degradation; glycolysis; pyruvate from D-glyceraldehyde 3-phosphate: step 3/5. In terms of biological role, catalyzes the interconversion of 2-phosphoglycerate and 3-phosphoglycerate. The protein is 2,3-bisphosphoglycerate-dependent phosphoglycerate mutase of Streptococcus sanguinis (strain SK36).